We begin with the raw amino-acid sequence, 424 residues long: Type II methyltransferase M.XorII (424 aa).

An SAM-dependent MTase C5-type domain is found at 4–367 (PIGIDLFAGA…GQIMKALRKK (364 aa)). Residue C83 is part of the active site. The tract at residues 404 to 424 (RSRPVDRPAPRRHEERELVTA) is disordered. Basic and acidic residues predominate over residues 406 to 424 (RPVDRPAPRRHEERELVTA).

This sequence belongs to the class I-like SAM-binding methyltransferase superfamily. C5-methyltransferase family.

The catalysed reaction is a 2'-deoxycytidine in DNA + S-adenosyl-L-methionine = a 5-methyl-2'-deoxycytidine in DNA + S-adenosyl-L-homocysteine + H(+). Its function is as follows. A methylase that recognizes the double-stranded sequence 5'-CGATCG-3', methylates C-? on both strands and protects the DNA from cleavage by the XorII endonuclease. This chain is Type II methyltransferase M.XorII (xorIIM), found in Xanthomonas oryzae pv. oryzae (strain KACC10331 / KXO85).